The primary structure comprises 396 residues: Metallophosphoesterase 1 (396 aa).

Residues 28-48 form a helical membrane-spanning segment; it reads TVVIISVLLFCEYFIYYLVLF. Residues D75, D117, N155, H249, H303, and H305 each coordinate a divalent metal cation. A helical transmembrane segment spans residues 356–376; the sequence is TVLTMYGAAAGFLMILILVHF.

The protein belongs to the metallophosphoesterase superfamily. MPPE1 family. As to quaternary structure, interacts with GPI-anchor proteins (via the GPI portion). Interacts with TMED10. It depends on Mn(2+) as a cofactor.

The protein resides in the endoplasmic reticulum-Golgi intermediate compartment membrane. Its function is as follows. Metallophosphoesterase that catalyzes the removal of a side-chain ethanolamine-phosphate (EtNP) from the second mannose of the GPI-anchor protein intermediate. Participates in the glycan remodeling steps of GPI-anchor maturation to allow an efficient transport of GPI-anchor proteins from the endoplasmic reticulum to the Golgi. The polypeptide is Metallophosphoesterase 1 (Mus musculus (Mouse)).